The chain runs to 83 residues: Exodeoxyribonuclease 7 small subunit (83 aa).

Belongs to the XseB family. In terms of assembly, heterooligomer composed of large and small subunits.

Its subcellular location is the cytoplasm. It carries out the reaction Exonucleolytic cleavage in either 5'- to 3'- or 3'- to 5'-direction to yield nucleoside 5'-phosphates.. Its function is as follows. Bidirectionally degrades single-stranded DNA into large acid-insoluble oligonucleotides, which are then degraded further into small acid-soluble oligonucleotides. The chain is Exodeoxyribonuclease 7 small subunit from Nitrobacter winogradskyi (strain ATCC 25391 / DSM 10237 / CIP 104748 / NCIMB 11846 / Nb-255).